The primary structure comprises 243 residues: Adenosylcobinamide-GDP ribazoletransferase (243 aa).

The next 6 membrane-spanning stretches (helical) occupy residues 33–53 (FLPV…LLAP), 59–79 (IIIV…HIDG), 105–125 (IGAF…TLAY), 127–147 (TENM…VFAA), 172–192 (VISI…GAII), and 223–243 (TIEI…SIII).

It belongs to the CobS family. Mg(2+) serves as cofactor.

It localises to the cell membrane. It catalyses the reaction alpha-ribazole + adenosylcob(III)inamide-GDP = adenosylcob(III)alamin + GMP + H(+). The catalysed reaction is alpha-ribazole 5'-phosphate + adenosylcob(III)inamide-GDP = adenosylcob(III)alamin 5'-phosphate + GMP + H(+). It participates in cofactor biosynthesis; adenosylcobalamin biosynthesis; adenosylcobalamin from cob(II)yrinate a,c-diamide: step 7/7. Joins adenosylcobinamide-GDP and alpha-ribazole to generate adenosylcobalamin (Ado-cobalamin). Also synthesizes adenosylcobalamin 5'-phosphate from adenosylcobinamide-GDP and alpha-ribazole 5'-phosphate. The protein is Adenosylcobinamide-GDP ribazoletransferase of Alkaliphilus oremlandii (strain OhILAs) (Clostridium oremlandii (strain OhILAs)).